Here is a 356-residue protein sequence, read N- to C-terminus: UDP-N-acetylglucosamine--N-acetylmuramyl-(pentapeptide) pyrophosphoryl-undecaprenol N-acetylglucosamine transferase (356 aa).

UDP-N-acetyl-alpha-D-glucosamine-binding positions include 15–17, asparagine 127, arginine 163, serine 191, isoleucine 244, 263–268, and glutamine 288; these read TGG and ALTVSE.

This sequence belongs to the glycosyltransferase 28 family. MurG subfamily.

Its subcellular location is the cell inner membrane. The catalysed reaction is di-trans,octa-cis-undecaprenyl diphospho-N-acetyl-alpha-D-muramoyl-L-alanyl-D-glutamyl-meso-2,6-diaminopimeloyl-D-alanyl-D-alanine + UDP-N-acetyl-alpha-D-glucosamine = di-trans,octa-cis-undecaprenyl diphospho-[N-acetyl-alpha-D-glucosaminyl-(1-&gt;4)]-N-acetyl-alpha-D-muramoyl-L-alanyl-D-glutamyl-meso-2,6-diaminopimeloyl-D-alanyl-D-alanine + UDP + H(+). The protein operates within cell wall biogenesis; peptidoglycan biosynthesis. Its function is as follows. Cell wall formation. Catalyzes the transfer of a GlcNAc subunit on undecaprenyl-pyrophosphoryl-MurNAc-pentapeptide (lipid intermediate I) to form undecaprenyl-pyrophosphoryl-MurNAc-(pentapeptide)GlcNAc (lipid intermediate II). The protein is UDP-N-acetylglucosamine--N-acetylmuramyl-(pentapeptide) pyrophosphoryl-undecaprenol N-acetylglucosamine transferase of Klebsiella pneumoniae (strain 342).